The primary structure comprises 142 residues: Snaclec 2 (142 aa).

A signal peptide spans 1–23 (MGRFIFVSFSLLVVFLSLSGTGA). C25 and C36 are joined by a disulfide. Positions 32–139 (YEGHCYRVFQ…CSETHNVICK (108 aa)) constitute a C-type lectin domain. N-linked (GlcNAc...) asparagine glycosylation occurs at N43. Intrachain disulfides connect C53-C138 and C115-C130.

This sequence belongs to the snaclec family. As to quaternary structure, heterodimer; disulfide-linked. As to expression, expressed by the venom gland.

The protein localises to the secreted. Interferes with one step of hemostasis (modulation of platelet aggregation, or coagulation cascade, for example). This chain is Snaclec 2, found in Sistrurus catenatus edwardsii (Desert massasauga).